Reading from the N-terminus, the 707-residue chain is Serine/threonine protein kinase UL97 (707 aa).

The span at 1-14 (MSSALRSRARSASL) shows a compositional bias: low complexity. Disordered regions lie at residues 1–32 (MSSALRSRARSASLGTTTQGWDPPPLRRPSRA), 113–147 (DGEKEDAASDKENQRRPVVPSTSSRGSAASGDGYH), 176–199 (FTGGSDPSDSVSGVRGGRKRPLRP), and 231–264 (ESQDSAVASGPGRVPQPLSGSSGEESATAVEADS). Over residues 113-127 (DGEKEDAASDKENQR) the composition is skewed to basic and acidic residues. Residues 178–188 (GGSDPSDSVSG) show a composition bias toward low complexity. Asp-456 serves as the catalytic Proton acceptor.

Belongs to the protein kinase superfamily. Tyr protein kinase family. HCMV ganciclovir subfamily. As to quaternary structure, interacts with UL83. Autophosphorylates on serine and threonine residues.

The protein localises to the virion. It catalyses the reaction L-seryl-[protein] + ATP = O-phospho-L-seryl-[protein] + ADP + H(+). The catalysed reaction is L-threonyl-[protein] + ATP = O-phospho-L-threonyl-[protein] + ADP + H(+). Functionally, serine/threonine protein kinase that plays important roles in several processes including nuclear viral egress, viral replication or regulation of host cell cycle progression. Participates in the acquisition of tegument during virion morphogenesis in the nucleus. Redistributes the host nuclear lamina by phosphorylating cellular Lamins-A/C. Plays a role in viral DNA synthesis by phosphorylating the DNA polymerase processivity factor UL44. Stimulates host cell cycle to support viral DNA synthesis by phosphorylating host retinoblastoma/RB1 protein. Additional substrates have been identified including host EF1D or H2B. Also phosphorylates host SAMHD1 and thereby counteracts its antiviral effect by reducing its dNTP hydrolase activity. The sequence is that of Serine/threonine protein kinase UL97 (UL97) from Homo sapiens (Human).